Here is a 183-residue protein sequence, read N- to C-terminus: ATP synthase subunit delta (183 aa).

It belongs to the ATPase delta chain family. As to quaternary structure, F-type ATPases have 2 components, F(1) - the catalytic core - and F(0) - the membrane proton channel. F(1) has five subunits: alpha(3), beta(3), gamma(1), delta(1), epsilon(1). F(0) has three main subunits: a(1), b(2) and c(10-14). The alpha and beta chains form an alternating ring which encloses part of the gamma chain. F(1) is attached to F(0) by a central stalk formed by the gamma and epsilon chains, while a peripheral stalk is formed by the delta and b chains.

Its subcellular location is the cell membrane. Its function is as follows. F(1)F(0) ATP synthase produces ATP from ADP in the presence of a proton or sodium gradient. F-type ATPases consist of two structural domains, F(1) containing the extramembraneous catalytic core and F(0) containing the membrane proton channel, linked together by a central stalk and a peripheral stalk. During catalysis, ATP synthesis in the catalytic domain of F(1) is coupled via a rotary mechanism of the central stalk subunits to proton translocation. In terms of biological role, this protein is part of the stalk that links CF(0) to CF(1). It either transmits conformational changes from CF(0) to CF(1) or is implicated in proton conduction. In Mesoplasma florum (strain ATCC 33453 / NBRC 100688 / NCTC 11704 / L1) (Acholeplasma florum), this protein is ATP synthase subunit delta.